The primary structure comprises 427 residues: Trigger factor (427 aa).

In terms of domain architecture, PPIase FKBP-type spans 163–248 (GDTVVIDFVG…VNEVKAKEVP (86 aa)).

Belongs to the FKBP-type PPIase family. Tig subfamily.

It is found in the cytoplasm. It carries out the reaction [protein]-peptidylproline (omega=180) = [protein]-peptidylproline (omega=0). Its function is as follows. Involved in protein export. Acts as a chaperone by maintaining the newly synthesized protein in an open conformation. Functions as a peptidyl-prolyl cis-trans isomerase. This chain is Trigger factor, found in Streptococcus thermophilus (strain CNRZ 1066).